The chain runs to 670 residues: MDSSGADLDRIEAQRSMLVSHDQRKDFSHSGGVGTTSPTGDTEPVPKFRTNLKLSDLFALPGEDVEMTPEIFGGMSNGEKECLEKLRSNGTPMERVKSNTGDSILHIAAKWGHLELVKEIIFECPCLLFEQNSSRQTPLHVATHGGHTKVVEALVASVTSALASLSTEESEGLNPHVLKDEDGNTALYYAIEGRYLEMATCLVNADKDAPFLGNNKGISSLYEAVDAGNKFEDLVKAILKTTDDNVDREVRKFNLDSKLQGNKHLAHVALKAKSIGVLDVILDEYPSLMDEQDEDGRTCLSYGASIGYYKGLCNILNRSTKGVYVCDQDGSFPIHSAAKNEHYEIIKEFIKRCPASKYLLNRLGQNILHVAAKNEASLTAYMLMHDKDTKHLGVGQDVDGNTPLHLAVMNWDFDSITCLASRNHEILKLRNKSGLRARDIAESEVKPNYIFHERWTLALLLYAIHSSGFESVKSLTIQSVPLDPKKNRHYVNALLVVAALVATVTFAAGFTIPGGYISDSKKPNLGRATLATNPTLFIFLLFDILAMQSSVATICTLIWAQLGDLALILKSLHVALPLLLFSLLCMPVAFLFGVITAIAHVKWLLVTISIISGGFFLFAIFILGPHVMLQRSHLPPSSGIFLKTFMLTIDISELFVILIKACFGCVACSE.

At 1–456 (MDSSGADLDR…PNYIFHERWT (456 aa)) the chain is on the cytoplasmic side. Residues 18 to 47 (LVSHDQRKDFSHSGGVGTTSPTGDTEPVPK) form a disordered region. 10 ANK repeats span residues 66–95 (EMTP…PMER), 100–129 (TGDS…CLLF), 134–163 (SRQT…SALA), 182–211 (DGNT…DAPF), 216–248 (KGIS…NVDR), 260–290 (QGNK…SLMD), 295–325 (DGRT…GVYV), 329–358 (DGSF…ASKY), 363–391 (LGQN…DTKH), and 399–428 (DGNT…EILK). Residues 457-477 (LALLLYAIHSSGFESVKSLTI) traverse the membrane as a helical segment. Topologically, residues 478–492 (QSVPLDPKKNRHYVN) are extracellular. A helical membrane pass occupies residues 493 to 513 (ALLVVAALVATVTFAAGFTIP). At 514–537 (GGYISDSKKPNLGRATLATNPTLF) the chain is on the cytoplasmic side. A helical membrane pass occupies residues 538-558 (IFLLFDILAMQSSVATICTLI). At 559-577 (WAQLGDLALILKSLHVALP) the chain is on the extracellular side. The helical transmembrane segment at 578-598 (LLLFSLLCMPVAFLFGVITAI) threads the bilayer. Residues 599 to 602 (AHVK) are Cytoplasmic-facing. Residues 603–623 (WLLVTISIISGGFFLFAIFIL) traverse the membrane as a helical segment. Topologically, residues 624 to 638 (GPHVMLQRSHLPPSS) are extracellular. The chain crosses the membrane as a helical span at residues 639 to 659 (GIFLKTFMLTIDISELFVILI). Topologically, residues 660–670 (KACFGCVACSE) are cytoplasmic.

In terms of assembly, component of large complexes containing, at least, FLS2, HSP70 and ACD6 in endoplasmic reticulum, plasma membrane and soluble fraction. Associated with HSP70 proteins during endoplasmic reticulum-associated degradation (ERAD). Reduced complex levels upon benzothiazole (BTH) treatment. In terms of processing, ubiquitinated. As to expression, basal expression requires light and salicylic acid (SA).

Its subcellular location is the cell membrane. The protein localises to the endoplasmic reticulum membrane. Functionally, dose-dependent activator of the defense response against virulent pathogens, including bacteria, fungi and oomycetes, that acts in a positive feedback loop with the defense signal salicylic acid (SA). Regulates the salicylic acid (SA) signaling pathway leading to cell death and modulating cell fate (e.g. cell enlargement and/or cell division). In response to SA signaling, triggers the accumulation of FLS2 at the plasma membrane, thus priming defenses. Involved in SA-dependent freezing signaling and tolerance. In Arabidopsis thaliana (Mouse-ear cress), this protein is Protein ACCELERATED CELL DEATH 6.